The following is a 252-amino-acid chain: Imidazole glycerol phosphate synthase subunit HisF (252 aa).

Active-site residues include Asp11 and Asp130.

This sequence belongs to the HisA/HisF family. Heterodimer of HisH and HisF.

The protein resides in the cytoplasm. It carries out the reaction 5-[(5-phospho-1-deoxy-D-ribulos-1-ylimino)methylamino]-1-(5-phospho-beta-D-ribosyl)imidazole-4-carboxamide + L-glutamine = D-erythro-1-(imidazol-4-yl)glycerol 3-phosphate + 5-amino-1-(5-phospho-beta-D-ribosyl)imidazole-4-carboxamide + L-glutamate + H(+). The protein operates within amino-acid biosynthesis; L-histidine biosynthesis; L-histidine from 5-phospho-alpha-D-ribose 1-diphosphate: step 5/9. IGPS catalyzes the conversion of PRFAR and glutamine to IGP, AICAR and glutamate. The HisF subunit catalyzes the cyclization activity that produces IGP and AICAR from PRFAR using the ammonia provided by the HisH subunit. The protein is Imidazole glycerol phosphate synthase subunit HisF of Staphylococcus aureus (strain bovine RF122 / ET3-1).